We begin with the raw amino-acid sequence, 24 residues long: uncharacterized protein (24 aa).

This is an uncharacterized protein from Schizosaccharomyces pombe (strain 972 / ATCC 24843) (Fission yeast).